Here is a 220-residue protein sequence, read N- to C-terminus: Probable nicotinate-nucleotide adenylyltransferase (220 aa).

Belongs to the NadD family.

The catalysed reaction is nicotinate beta-D-ribonucleotide + ATP + H(+) = deamido-NAD(+) + diphosphate. Its pathway is cofactor biosynthesis; NAD(+) biosynthesis; deamido-NAD(+) from nicotinate D-ribonucleotide: step 1/1. In terms of biological role, catalyzes the reversible adenylation of nicotinate mononucleotide (NaMN) to nicotinic acid adenine dinucleotide (NaAD). The polypeptide is Probable nicotinate-nucleotide adenylyltransferase (Yersinia enterocolitica serotype O:8 / biotype 1B (strain NCTC 13174 / 8081)).